A 204-amino-acid chain; its full sequence is Recombination protein RecR (204 aa).

The C4-type zinc finger occupies 61-76 (CARCNTFSETQICSTC). The 100-residue stretch at 84-183 (SLLCIVETPA…KVTRIARGIP (100 aa)) folds into the Toprim domain.

Belongs to the RecR family.

May play a role in DNA repair. It seems to be involved in an RecBC-independent recombinational process of DNA repair. It may act with RecF and RecO. This chain is Recombination protein RecR, found in Polynucleobacter asymbioticus (strain DSM 18221 / CIP 109841 / QLW-P1DMWA-1) (Polynucleobacter necessarius subsp. asymbioticus).